We begin with the raw amino-acid sequence, 402 residues long: Mitochondrial inner membrane protein OXA1 (402 aa).

The N-terminal 42 residues, 1–42 (MFKLTSRLVTSRFAASSRLATARTIVLPRPHPSWISFQAKRF), are a transit peptide targeting the mitochondrion. The Mitochondrial intermembrane segment spans residues 43 to 118 (NSTGPNANDV…PSDIIQHVLE (76 aa)). A helical membrane pass occupies residues 119–139 (AVHVYSGLPWWGTIAATTILI). The Mitochondrial matrix segment spans residues 140–199 (RCLMFPLYVKSSDTVARNSHIKPELDALNNKLMSTTDLQQGQLVAMQRKKLLSSHGIKNR). A helical membrane pass occupies residues 200 to 220 (WLAAPMLQIPIALGFFNALRH). Residues 221–239 (MANYPVDGFANQGVAWFTD) lie on the Mitochondrial intermembrane side of the membrane. The helical transmembrane segment at 240–260 (LTQADPYLGLQVITAAVFISF) threads the bilayer. Residues 261–275 (TRLGGETGAQQFSSP) lie on the Mitochondrial matrix side of the membrane. The chain crosses the membrane as a helical span at residues 276 to 292 (MKRLFTILPIISIPATM). Over 293–297 (NLSSA) the chain is Mitochondrial intermembrane. Residues 298–316 (VVLYFAFNGAFSVLQTMIL) traverse the membrane as a helical segment. The Mitochondrial matrix segment spans residues 317–402 (RNKWVRSKLK…HKSNFINNKK (86 aa)). Positions 366–385 (RQLMQDNEKKLQESFKEKRQ) are enriched in basic and acidic residues. Residues 366–386 (RQLMQDNEKKLQESFKEKRQN) form a disordered region.

Belongs to the OXA1/ALB3/YidC family. Interacts with the large ribosome subunit of mitochondrial ribosome. Interacts directly with MRP20. Interacts with OXA1.

Its subcellular location is the mitochondrion inner membrane. Mitochondrial inner membrane insertase that mediates the insertion of both mitochondrion-encoded precursors and nuclear-encoded proteins from the matrix into the inner membrane. Links mitoribosomes with the inner membrane. Forms pores capable of accommodating translocating protein segments. Essential for the activity and assembly of cytochrome c oxidase. Plays a central role in the translocation and export of the N-terminal part of the COX2 protein into the mitochondrial intermembrane space. The polypeptide is Mitochondrial inner membrane protein OXA1 (Saccharomyces cerevisiae (strain ATCC 204508 / S288c) (Baker's yeast)).